The sequence spans 72 residues: U10-myrmicitoxin-Tb1a (72 aa).

The first 26 residues, Met-1–Ala-26, serve as a signal peptide directing secretion. Residues Lys-27–Ala-36 constitute a propeptide that is removed on maturation.

This sequence belongs to the formicidae venom precursor-01 superfamily. Expressed by the venom gland.

Its subcellular location is the secreted. Functionally, in vivo, this neurotoxin paralyzes about 40% of blowflies (L.caesar) one hour after intrathoracic injection, when tested at high doses (28 nmol/g). In Tetramorium bicarinatum (Tramp ant), this protein is U10-myrmicitoxin-Tb1a.